Consider the following 171-residue polypeptide: uncharacterized protein (171 aa).

The N-terminal stretch at Met-1 to Ala-18 is a signal peptide. Cys-19 is lipidated: N-palmitoyl cysteine. The S-diacylglycerol cysteine moiety is linked to residue Cys-19.

Its subcellular location is the cell membrane. This is an uncharacterized protein from Escherichia coli (strain K12).